A 700-amino-acid polypeptide reads, in one-letter code: Protein kinase C, eye isozyme (700 aa).

2 Phorbol-ester/DAG-type zinc fingers span residues 71 to 121 (GHRF…VFKC) and 136 to 186 (KHGW…PPMC). The region spanning 189–310 (DISEVRGKLL…LQKEPVDGWY (122 aa)) is the C2 domain. Asp-222, Asp-228, Asp-281, Asp-283, Ser-286, and Asp-289 together coordinate Ca(2+). Residues 371-629 (FNFVKVIGKG…RQEITTHPFF (259 aa)) form the Protein kinase domain. ATP is bound by residues 377–385 (IGKGSFGKV) and Lys-400. Catalysis depends on Asp-495, which acts as the Proton acceptor. Positions 630 to 700 (RNVDWDKAEA…FMNPEFITII (71 aa)) constitute an AGC-kinase C-terminal domain.

The protein belongs to the protein kinase superfamily. AGC Ser/Thr protein kinase family. PKC subfamily. It depends on Ca(2+) as a cofactor. As to expression, exclusively expressed in photoreceptor cells.

The enzyme catalyses L-seryl-[protein] + ATP = O-phospho-L-seryl-[protein] + ADP + H(+). The catalysed reaction is L-threonyl-[protein] + ATP = O-phospho-L-threonyl-[protein] + ADP + H(+). Functionally, this is a calcium-activated, phospholipid-dependent, serine- and threonine-specific enzyme. This isozyme is a negative regulator of the visual transduction cascade and has been shown to be required for photoreceptor cell inactivation and light adaptation. Negative regulation is dependent on interaction with scaffolding protein inaD. Acts in a hh-signaling pathway which regulates the Duox-dependent gut immune response to bacterial uracil; required for the activation of Cad99C and consequently Cad99C-dependent endosome formation, which is essential for the Duox-dependent production of reactive oxygen species (ROS) in response to intestinal bacterial infection. In Drosophila melanogaster (Fruit fly), this protein is Protein kinase C, eye isozyme (inaC).